The sequence spans 212 residues: Ribosomal RNA small subunit methyltransferase G (212 aa).

Residues G73, F78, 96–98 (ESS), 124–125 (VE), and R141 each bind S-adenosyl-L-methionine.

This sequence belongs to the methyltransferase superfamily. RNA methyltransferase RsmG family.

Its subcellular location is the cytoplasm. Functionally, specifically methylates the N7 position of a guanine in 16S rRNA. The polypeptide is Ribosomal RNA small subunit methyltransferase G (Aster yellows witches'-broom phytoplasma (strain AYWB)).